A 1296-amino-acid chain; its full sequence is Histone-lysine N-methyltransferase EHMT1 (1296 aa).

Disordered stretches follow at residues 1–111 (MAAA…NHVT) and 170–200 (PQTP…TDVR). Ala-2 carries the post-translational modification N-acetylalanine. The segment covering 14–31 (QETKQDCCMKTELLREDT) has biased composition (basic and acidic residues). A Glycyl lysine isopeptide (Lys-Gly) (interchain with G-Cter in SUMO1); alternate cross-link involves residue Lys-23. Residue Lys-23 forms a Glycyl lysine isopeptide (Lys-Gly) (interchain with G-Cter in SUMO2); alternate linkage. Polar residues predominate over residues 77-89 (NTRASPQEGTNRV). The segment covering 97–106 (VSERDTEVGK) has biased composition (basic and acidic residues). Residues Lys-191, Lys-229, Lys-232, Lys-315, and Lys-325 each participate in a glycyl lysine isopeptide (Lys-Gly) (interchain with G-Cter in SUMO2) cross-link. The disordered stretch occupies residues 341–470 (SLEMDSEDED…SSPGSMEQAA (130 aa)). Residues 342 to 360 (LEMDSEDEDSDELEDDEDH) show a composition bias toward acidic residues. The span at 371–391 (EDSRTSKESMSETDRAAKMDG) shows a compositional bias: basic and acidic residues. Positions 392 to 414 (DSEEEQESPDTGEDEDGGDESDL) are enriched in acidic residues. Lys-430 participates in a covalent cross-link: Glycyl lysine isopeptide (Lys-Gly) (interchain with G-Cter in SUMO2). Residue Ser-433 is modified to Phosphoserine. Over residues 438–450 (PARKRRRRSRKKP) the composition is skewed to basic residues. Ser-481 bears the Phosphoserine mark. Glycyl lysine isopeptide (Lys-Gly) (interchain with G-Cter in SUMO2) cross-links involve residues Lys-559, Lys-644, Lys-659, and Lys-729. The tract at residues 653–714 (LAPGQEKSLA…PTSGLSQGPG (62 aa)) is disordered. ANK repeat units follow at residues 735–764 (FHPK…DPNF), 770–799 (SKRS…NIDT), 803–832 (DQRT…QVDP), 836–866 (EGST…DVNC), 870–899 (GGWT…DINI), 903–932 (EENI…DLHA), 936–965 (HGDS…DVTL), and 969–1002 (EGET…DKPV). Residues 903–905 (EEN) are histone H3K9me binding. Ser-1046 is subject to Phosphoserine. Residues 1058 to 1121 (QYCVCVDDCS…NCRNRVVQNG (64 aa)) form the Pre-SET domain. Residues Cys-1060, Cys-1062, Cys-1066, Cys-1071, Cys-1073, Cys-1103, Cys-1107, Cys-1109, and Cys-1113 each coordinate Zn(2+). One can recognise an SET domain in the interval 1124–1241 (ARLQLYRTQD…AGEQLGFDYG (118 aa)). S-adenosyl-L-methionine contacts are provided by residues 1134 to 1136 (MGW), Tyr-1171, and 1198 to 1199 (NH). An interaction with histone H3 region spans residues 1160 to 1179 (DSEADVREEDSYLFDLDNKD). Cys-1201 provides a ligand contact to Zn(2+). Positions 1240-1243 (YGER) are interaction with histone H3. Cys-1254 is a binding site for Zn(2+). Arg-1255 provides a ligand contact to S-adenosyl-L-methionine. Zn(2+) is bound by residues Cys-1256 and Cys-1261. Residues 1271-1296 (RQASAAQEPQENGLPDTSSAAAADPL) are disordered.

The protein belongs to the class V-like SAM-binding methyltransferase superfamily. As to quaternary structure, interacts with WIZ. Part of the E2F6.com-1 complex in G0 phase composed of E2F6, MGA, MAX, TFDP1, CBX3, BAT8, EHMT1, RING1, RNF2, MBLR, L3MBTL2 and YAF2. Interacts with MPHOSPH8. Interacts with CDYL. Interacts with REST only in the presence of CDYL. Part of a complex containing at least CDYL, REST, WIZ, SETB1, EHMT1 and EHMT2. Heterodimer; heterodimerizes with EHMT2. Interacts (via ANK repeats) with RELA (when monomethylated at 'Lys-310'). Interacts with Baz2b. Ubiquitous.

The protein localises to the nucleus. It is found in the chromosome. The catalysed reaction is N(6)-methyl-L-lysyl(9)-[histone H3] + S-adenosyl-L-methionine = N(6),N(6)-dimethyl-L-lysyl(9)-[histone H3] + S-adenosyl-L-homocysteine + H(+). The enzyme catalyses L-lysyl(9)-[histone H3] + S-adenosyl-L-methionine = N(6)-methyl-L-lysyl(9)-[histone H3] + S-adenosyl-L-homocysteine + H(+). Methyltransferase activity is inhibited by BIX-01294. Efficiently inhibited by compound E72, a BIX-01294 derivative in which the diazepane ring and the benzyl are replaced with a 3-dimethylaminopropyl and a 5-aminopentyl group at sites B and C, respectively. Histone methyltransferase that specifically mono- and dimethylates 'Lys-9' of histone H3 (H3K9me1 and H3K9me2, respectively) in euchromatin. H3K9me represents a specific tag for epigenetic transcriptional repression by recruiting HP1 proteins to methylated histones. Also weakly methylates 'Lys-27' of histone H3 (H3K27me). Also required for DNA methylation, the histone methyltransferase activity is not required for DNA methylation, suggesting that these 2 activities function independently. Probably targeted to histone H3 by different DNA-binding proteins like E2F6, MGA, MAX and/or DP1. During G0 phase, it probably contributes to silencing of MYC- and E2F-responsive genes, suggesting a role in G0/G1 transition in cell cycle. In addition to the histone methyltransferase activity, also methylates non-histone proteins: mediates dimethylation of 'Lys-373' of p53/TP53. Represses the expression of mitochondrial function-related genes, perhaps by occupying their promoter regions, working in concert with probable chromatin reader Baz2b. The sequence is that of Histone-lysine N-methyltransferase EHMT1 (Ehmt1) from Mus musculus (Mouse).